Here is a 237-residue protein sequence, read N- to C-terminus: F-box only protein 50 (237 aa).

The FBA domain maps to 31 to 231 (VFETKPFERN…VTDSSVIVKA (201 aa)). The segment at 40–82 (NLLQNPSPYGVNHTVPPPEPHRSGIPPPSDRPPQLEPEGNFSG) is disordered. Pro residues predominate over residues 64–74 (IPPPSDRPPQL).

Expressed in nonspecific cytotoxic cells (NCC).

The protein resides in the cytoplasm. Functionally, may promote cell proliferation. The sequence is that of F-box only protein 50 (nccrp1) from Danio rerio (Zebrafish).